Consider the following 103-residue polypeptide: Cyclotide vibi-I (103 aa).

The N-terminal stretch at 1 to 9 (AAFALPAFA) is a signal peptide. The propeptide occupies 10 to 69 (SFEKDVITPAALEAVLNRKAPLSNIMMENDAILNVIANVKTVISNPVLEEALLKTNHGVN). Positions 70–99 (GIPCGESCVWIPCLTSTVGCSCKSKVCYRN) form a cross-link, cyclopeptide (Gly-Asn). Disulfide bonds link C73/C89, C77/C91, and C82/C96. Residues 100–103 (SLDN) constitute a propeptide that is removed on maturation.

Post-translationally, this is a cyclic peptide.

Its function is as follows. Probably participates in a plant defense mechanism. This is Cyclotide vibi-I from Viola biflora (Yellow wood violet).